We begin with the raw amino-acid sequence, 133 residues long: P2Y purinoceptor 2 (133 aa).

Residues 1 to 26 lie on the Cytoplasmic side of the membrane; it reads ISVHRCLGVLRPLHSLRWGRARYARR. The chain crosses the membrane as a helical span at residues 27–47; it reads VAFAVWVLVLYCQAPVLYFVT. At 48-74 the chain is on the extracellular side; it reads TSTRSSRIICHDTSARELFSHFVAYSS. The chain crosses the membrane as a helical span at residues 75-95; that stretch reads VMLSLLFAAPFAVILVCYVLM. Residues 96–116 are Cytoplasmic-facing; that stretch reads ARRLLKPAYGTSGGLPRAKRK. Residues 117 to 133 form a helical membrane-spanning segment; the sequence is SVRTIAIVLTVFVLCFL.

It belongs to the G-protein coupled receptor 1 family.

It localises to the cell membrane. Receptor for ATP and UTP coupled to G-proteins that activate a phosphatidylinositol-calcium second messenger system. The sequence is that of P2Y purinoceptor 2 (P2RY2) from Bos taurus (Bovine).